The following is a 223-amino-acid chain: UPF0441 protein YgiB (223 aa).

Residues 178–195 are compositionally biased toward low complexity; it reads TVPKTAMAPKPATTTTVT. The disordered stretch occupies residues 178–223; that stretch reads TVPKTAMAPKPATTTTVTRGGFGESIAKQSTMQRSATGTSSRSMGG. Positions 204–223 are enriched in polar residues; that stretch reads AKQSTMQRSATGTSSRSMGG.

Belongs to the UPF0441 family.

This is UPF0441 protein YgiB from Shigella boydii serotype 4 (strain Sb227).